The sequence spans 830 residues: Frameshifted structural polyprotein (830 aa).

A disordered region spans residues 58 to 109 (AIAPARPPKPKKKKTTKPKPKTQPKKINGKTQQQKKKDKQADKKKKKPGKRE). Residues 65–107 (PKPKKKKTTKPKPKTQPKKINGKTQQQKKKDKQADKKKKKPGK) are compositionally biased toward basic residues. The interval 94 to 106 (KDKQADKKKKKPG) is ribosome-binding. A disulfide bridge connects residues Cys119 and Cys134. Residues 119-267 (CIFEVKHEGK…RVTPEGSEEW (149 aa)) form the Peptidase S3 domain. Active-site charge relay system residues include His145, Asp167, and Ser219. 4 N-linked (GlcNAc...) asparagine; by host glycosylation sites follow: Asn280, Asn327, Asn533, and Asn595. Residues 702 to 722 (AVVGMSLLALISIFASCYMLV) traverse the membrane as a helical segment. Residues Cys718, Cys728, Cys748, and Cys749 are each lipidated (S-palmitoyl cysteine; by host). Residues 728 to 748 (CLTPYALTPGAAVPWTLGILC) are transient transmembrane before p62-6K protein processing. 2 helical membrane-spanning segments follow: residues 771-791 (ALFW…TYCL) and 793-813 (NVLC…RGHR).

As to quaternary structure, homodimer. Homomultimer. Interacts with host karyopherin KPNA4; this interaction allows the nuclear import of the viral capsid protein. Precursor of protein E3/E2: The precursor of protein E3/E2 and E1 form a heterodimer shortly after synthesis. Interacts with host IRAK1; the interaction leads to inhibition of IRAK1-dependent signaling. Processing of the precursor of protein E3/E2 into E2 and E3 results in a heterodimer of the spike glycoproteins E2 and E1. Spike at virion surface are constituted of three E2-E1 heterodimers. Interacts with 6K protein. Interacts with host MXRA8; this interaction mediates virus entry. In terms of processing, specific enzymatic cleavages in vivo yield mature proteins. Capsid protein is auto-cleaved during polyprotein translation, unmasking a signal peptide at the N-terminus of the precursor of E3/E2. The remaining polyprotein is then targeted to the host endoplasmic reticulum, where host signal peptidase cleaves it into pE2 and TF. pE2 is further processed to mature E3 and E2 by host furin in trans-Golgi vesicle.

The protein resides in the virion. It is found in the host cytoplasm. Its subcellular location is the host cell membrane. The protein localises to the host nucleus. It localises to the virion membrane. It carries out the reaction Autocatalytic release of the core protein from the N-terminus of the togavirus structural polyprotein by hydrolysis of a -Trp-|-Ser- bond.. In terms of biological role, forms an icosahedral capsid with a T=4 symmetry composed of 240 copies of the capsid protein surrounded by a lipid membrane through which penetrate 80 spikes composed of trimers of E1-E2 heterodimers. The capsid protein binds to the viral RNA genome at a site adjacent to a ribosome binding site for viral genome translation following genome release. Possesses a protease activity that results in its autocatalytic cleavage from the nascent structural protein. Following its self-cleavage, the capsid protein transiently associates with ribosomes, and within several minutes the protein binds to viral RNA and rapidly assembles into icosahedric core particles. The resulting nucleocapsid eventually associates with the cytoplasmic domain of the spike glycoprotein E2 at the cell membrane, leading to budding and formation of mature virions. In case of infection, new virions attach to target cells and after clathrin-mediated endocytosis their membrane fuses with the host endosomal membrane. This leads to the release of the nucleocapsid into the cytoplasm, followed by an uncoating event necessary for the genomic RNA to become accessible. The uncoating might be triggered by the interaction of capsid proteins with ribosomes. Binding of ribosomes would release the genomic RNA since the same region is genomic RNA-binding and ribosome-binding. Specifically inhibits interleukin-1 receptor-associated kinase 1/IRAK1-dependent signaling during viral entry, representing a means by which the alphaviruses may evade innate immune detection and activation prior to viral gene expression. Provides the signal sequence for p62 (E3/E2) translocation to the host endoplasmic reticulum. Mediates pH protection of E1 during secretory pathway trans- port. Its function is as follows. Plays a role in viral attachment to target host cell, by binding to the cell receptor. Synthesized as a p62 precursor which is processed by furin at the cell membrane just before virion budding, giving rise to E2-E1 heterodimer. The p62-E1 heterodimer is stable, whereas E2-E1 is unstable and dissociate at low pH. p62 is processed at the last step, presumably to avoid E1 fusion activation before its final export to cell surface. E2 C-terminus contains a transitory transmembrane that would be disrupted by palmitoylation, resulting in reorientation of the C-terminal tail from lumenal to cytoplasmic side. This step is critical since E2 C-terminus is involved in budding by interacting with capsid proteins. This release of E2 C-terminus in cytoplasm occurs lately in protein export, and precludes premature assembly of particles at the endoplasmic reticulum membrane. Functionally, virion component that may play a role during viral assembly. The protein is Frameshifted structural polyprotein of Aedes (Middle-African hedgehog).